The chain runs to 917 residues: Bifunctional aspartokinase/homoserine dehydrogenase 2, chloroplastic (917 aa).

The N-terminal 89 residues, 1 to 89 (MQGLAVSCQL…EVNTYLPKGD (89 aa)), are a transit peptide targeting the chloroplast. The interval 90-338 (MWSVHKFGGT…VSEAVILSTL (249 aa)) is aspartokinase. An interface region spans residues 339-563 (SYQEAWEMSY…LSKTTLAVGI (225 aa)). 2 consecutive ACT domains span residues 413–488 (VEGT…VING) and 494–571 (AVGL…LIGG). The tract at residues 564-917 (IGPGLIGGAL…RLASYLGAPS (354 aa)) is homoserine dehydrogenase. NAD(+) is bound by residues isoleucine 569 and threonine 650. Residues isoleucine 569, threonine 650, and lysine 674 each contribute to the NADP(+) site. 3 residues coordinate NADPH: isoleucine 569, threonine 650, and lysine 674. Na(+)-binding residues include glutamate 701, valine 704, alanine 706, and leucine 708. 2 residues coordinate NADP(+): glycine 759 and glutamate 762. The L-homoserine site is built by glutamate 762 and aspartate 773. Catalysis depends on lysine 777, which acts as the Proton donor. Residue glycine 894 coordinates NAD(+). Residue glycine 894 coordinates NADP(+). An NADPH-binding site is contributed by glycine 894.

In the N-terminal section; belongs to the aspartokinase family. It in the C-terminal section; belongs to the homoserine dehydrogenase family. In terms of assembly, homo- or heterodimer. A metal cation is required as a cofactor.

The protein localises to the plastid. It is found in the chloroplast. It carries out the reaction L-homoserine + NADP(+) = L-aspartate 4-semialdehyde + NADPH + H(+). The enzyme catalyses L-homoserine + NAD(+) = L-aspartate 4-semialdehyde + NADH + H(+). It catalyses the reaction L-aspartate + ATP = 4-phospho-L-aspartate + ADP. The protein operates within amino-acid biosynthesis; L-lysine biosynthesis via DAP pathway; (S)-tetrahydrodipicolinate from L-aspartate: step 1/4. It participates in amino-acid biosynthesis; L-methionine biosynthesis via de novo pathway; L-homoserine from L-aspartate: step 1/3. Its pathway is amino-acid biosynthesis; L-methionine biosynthesis via de novo pathway; L-homoserine from L-aspartate: step 3/3. It functions in the pathway amino-acid biosynthesis; L-threonine biosynthesis; L-threonine from L-aspartate: step 1/5. The protein operates within amino-acid biosynthesis; L-threonine biosynthesis; L-threonine from L-aspartate: step 3/5. Its function is as follows. Bifunctional aspartate kinase and homoserine dehydrogenase that catalyzes the first and the third steps toward the synthesis of lysine, methionine and threonine from aspartate. In Zea mays (Maize), this protein is Bifunctional aspartokinase/homoserine dehydrogenase 2, chloroplastic (AKHSDH2).